A 552-amino-acid chain; its full sequence is MRSDTVKKGFEKAPQRSLFKAMGYTDEEIRRPLIAVVNSWNEVVPGHIHLDRIAEAVKAGIRLAGATPMEFNVIGVCDGIAMGHIGMKYSLITRELIADSIEAMVMAHQFDGMVLIPNCDKIVPGMLIAAARVNIPAILISGGPMLAGKIGDKVCDLNSVFEGVGAYSAGKISEEDLYALEENACPGCGSCSGMFTANTMNCLSEVLGLALPGNGTIPAVMAARIRLAKMAGMKIVELVEKDIKPSDILTVEAFENALAVDMALGGSTNTILHLPAIANEVGIKLNLDIINAISDRTPNLCKLSPAGQHHIEDLYFAGGVQAVMNELSKKGLLHLNLMTVTGKTVGENIKDANVKNYNVIRPIDNPYSETGGLVIVRGNLAPDGAVVKKSAVPPKLMKHRGPARVFESGEEVFEAILKGKIQKGDVIVIRYEGPKGGPGMREMLSPTSALAGVGLIEDVALITDGRFSGATRGACFGHVSPEAAERGPIAAVQDGDMISIDIENKTLTLEVPEEEIKRRLEILPPFEPKVKKGYLYRYSKLVRSASTGAILE.

Asp-78 contributes to the Mg(2+) binding site. [2Fe-2S] cluster is bound at residue Cys-119. Residues Asp-120 and Lys-121 each contribute to the Mg(2+) site. Lys-121 carries the post-translational modification N6-carboxylysine. Cys-191 is a [2Fe-2S] cluster binding site. Glu-442 contributes to the Mg(2+) binding site. Residue Ser-468 is the Proton acceptor of the active site.

The protein belongs to the IlvD/Edd family. Homodimer. It depends on [2Fe-2S] cluster as a cofactor. Mg(2+) is required as a cofactor.

It carries out the reaction (2R)-2,3-dihydroxy-3-methylbutanoate = 3-methyl-2-oxobutanoate + H2O. The catalysed reaction is (2R,3R)-2,3-dihydroxy-3-methylpentanoate = (S)-3-methyl-2-oxopentanoate + H2O. It participates in amino-acid biosynthesis; L-isoleucine biosynthesis; L-isoleucine from 2-oxobutanoate: step 3/4. The protein operates within amino-acid biosynthesis; L-valine biosynthesis; L-valine from pyruvate: step 3/4. Its function is as follows. Functions in the biosynthesis of branched-chain amino acids. Catalyzes the dehydration of (2R,3R)-2,3-dihydroxy-3-methylpentanoate (2,3-dihydroxy-3-methylvalerate) into 2-oxo-3-methylpentanoate (2-oxo-3-methylvalerate) and of (2R)-2,3-dihydroxy-3-methylbutanoate (2,3-dihydroxyisovalerate) into 2-oxo-3-methylbutanoate (2-oxoisovalerate), the penultimate precursor to L-isoleucine and L-valine, respectively. The chain is Dihydroxy-acid dehydratase from Caldicellulosiruptor bescii (strain ATCC BAA-1888 / DSM 6725 / KCTC 15123 / Z-1320) (Anaerocellum thermophilum).